Here is a 366-residue protein sequence, read N- to C-terminus: MKTNLLDFTLPALTEHFAAMGEKPFRAKQVMRWMHQMGQNDFDAMTDLAKSLRAKLHDTATVTVPSLMLEQASSDGTRKWLLDVGTGNRVETVFIPEDDRGTLCVSSQVGCALECTFCSTGRQGFNRNLSTAEIIGQLWWANKSMGVTPKNERVISNVVMMGMGEPLANYDNVVAAMRIMLDDHGYGLSRRRVTLSTSGLVPAMDRLREDCPVALAVSLHAPNDRIRDEIVPINKKYPLRELLAACERYLEKAPRDFVTFEYVMLDQINDRPEHARELVALVRDVPCKFNLIPFNPFPNSGYGRASNNAVRAFRDILAEAGYITTVRKTRGEDIDAACGQLAGQVQDKTQRKVRWLDKGGSTEAGV.

Glu91 functions as the Proton acceptor in the catalytic mechanism. A Radical SAM core domain is found at 97–333 (EDDRGTLCVS…TTVRKTRGED (237 aa)). A disulfide bridge connects residues Cys104 and Cys338. [4Fe-4S] cluster-binding residues include Cys111, Cys115, and Cys118. Residues 164–165 (GE), Ser196, 218–220 (SLH), and Asn295 each bind S-adenosyl-L-methionine. Cys338 functions as the S-methylcysteine intermediate in the catalytic mechanism.

It belongs to the radical SAM superfamily. RlmN family. [4Fe-4S] cluster is required as a cofactor.

The protein resides in the cytoplasm. It carries out the reaction adenosine(2503) in 23S rRNA + 2 reduced [2Fe-2S]-[ferredoxin] + 2 S-adenosyl-L-methionine = 2-methyladenosine(2503) in 23S rRNA + 5'-deoxyadenosine + L-methionine + 2 oxidized [2Fe-2S]-[ferredoxin] + S-adenosyl-L-homocysteine. It catalyses the reaction adenosine(37) in tRNA + 2 reduced [2Fe-2S]-[ferredoxin] + 2 S-adenosyl-L-methionine = 2-methyladenosine(37) in tRNA + 5'-deoxyadenosine + L-methionine + 2 oxidized [2Fe-2S]-[ferredoxin] + S-adenosyl-L-homocysteine. Specifically methylates position 2 of adenine 2503 in 23S rRNA and position 2 of adenine 37 in tRNAs. m2A2503 modification seems to play a crucial role in the proofreading step occurring at the peptidyl transferase center and thus would serve to optimize ribosomal fidelity. In Laribacter hongkongensis (strain HLHK9), this protein is Dual-specificity RNA methyltransferase RlmN.